The primary structure comprises 179 residues: Large ribosomal subunit protein uL5 (179 aa).

This sequence belongs to the universal ribosomal protein uL5 family. Part of the 50S ribosomal subunit; part of the 5S rRNA/L5/L18/L25 subcomplex. Contacts the 5S rRNA and the P site tRNA. Forms a bridge to the 30S subunit in the 70S ribosome.

In terms of biological role, this is one of the proteins that bind and probably mediate the attachment of the 5S RNA into the large ribosomal subunit, where it forms part of the central protuberance. In the 70S ribosome it contacts protein S13 of the 30S subunit (bridge B1b), connecting the 2 subunits; this bridge is implicated in subunit movement. Contacts the P site tRNA; the 5S rRNA and some of its associated proteins might help stabilize positioning of ribosome-bound tRNAs. In Vesicomyosocius okutanii subsp. Calyptogena okutanii (strain HA), this protein is Large ribosomal subunit protein uL5.